We begin with the raw amino-acid sequence, 478 residues long: Sulfate adenylyltransferase subunit 1 (478 aa).

In terms of domain architecture, tr-type G spans 24-240; that stretch reads KSLLRFLTCG…VLENVDIDAD (217 aa). The interval 33-40 is G1; it reads GSVDDGKS. 33 to 40 contributes to the GTP binding site; that stretch reads GSVDDGKS. Residues 91 to 95 are G2; that stretch reads GITID. Residues 112–115 are G3; that stretch reads DTPG. Residues 112–116 and 167–170 each bind GTP; these read DTPGH and NKMD. The tract at residues 167 to 170 is G4; the sequence is NKMD. The interval 206–208 is G5; the sequence is SAL.

This sequence belongs to the TRAFAC class translation factor GTPase superfamily. Classic translation factor GTPase family. CysN/NodQ subfamily. Heterodimer composed of CysD, the smaller subunit, and CysN.

The enzyme catalyses sulfate + ATP + H(+) = adenosine 5'-phosphosulfate + diphosphate. It functions in the pathway sulfur metabolism; hydrogen sulfide biosynthesis; sulfite from sulfate: step 1/3. With CysD forms the ATP sulfurylase (ATPS) that catalyzes the adenylation of sulfate producing adenosine 5'-phosphosulfate (APS) and diphosphate, the first enzymatic step in sulfur assimilation pathway. APS synthesis involves the formation of a high-energy phosphoric-sulfuric acid anhydride bond driven by GTP hydrolysis by CysN coupled to ATP hydrolysis by CysD. This Aliivibrio fischeri (strain MJ11) (Vibrio fischeri) protein is Sulfate adenylyltransferase subunit 1.